The following is a 147-amino-acid chain: Transthyretin (147 aa).

Positions 1-20 are cleaved as a signal peptide; the sequence is MASFRLLLLCLAGLVFVSEA. Cysteine 30 bears the Sulfocysteine mark. Lysine 35 contacts L-thyroxine. At glutamate 62 the chain carries 4-carboxyglutamate. Phosphoserine is present on serine 72. Glutamate 74 serves as a coordination point for L-thyroxine. The N-linked (GlcNAc...) asparagine glycan is linked to asparagine 118. Serine 137 contributes to the L-thyroxine binding site.

It belongs to the transthyretin family. Homotetramer. Dimer of dimers. In the homotetramer, subunits assemble around a central channel that can accommodate two ligand molecules. Interacts with RBP4. Post-translationally, sulfonation of the reactive cysteine Cys-30 enhances the stability of the native conformation of TTR, avoiding misassembly of the protein leading to amyloid formation. Highly expressed in the choroid plexus.

The protein resides in the secreted. Thyroid hormone-binding protein. Probably transports thyroxine from the bloodstream to the brain. This chain is Transthyretin (TTR), found in Ovis aries (Sheep).